Reading from the N-terminus, the 435-residue chain is tRNA-2-methylthio-N(6)-dimethylallyladenosine synthase (435 aa).

The MTTase N-terminal domain maps to 1–117 (MKYFIKTYGC…MPKLLEDVKV (117 aa)). 6 residues coordinate [4Fe-4S] cluster: cysteine 10, cysteine 46, cysteine 80, cysteine 156, cysteine 160, and cysteine 163. One can recognise a Radical SAM core domain in the interval 142-370 (RDNSYCAYVT…LEIQKAITSK (229 aa)). One can recognise a TRAM domain in the interval 373 to 433 (QRYKNTVQKV…FQSLDGVVQN (61 aa)).

The protein belongs to the methylthiotransferase family. MiaB subfamily. Monomer. It depends on [4Fe-4S] cluster as a cofactor.

The protein localises to the cytoplasm. The catalysed reaction is N(6)-dimethylallyladenosine(37) in tRNA + (sulfur carrier)-SH + AH2 + 2 S-adenosyl-L-methionine = 2-methylsulfanyl-N(6)-dimethylallyladenosine(37) in tRNA + (sulfur carrier)-H + 5'-deoxyadenosine + L-methionine + A + S-adenosyl-L-homocysteine + 2 H(+). Its function is as follows. Catalyzes the methylthiolation of N6-(dimethylallyl)adenosine (i(6)A), leading to the formation of 2-methylthio-N6-(dimethylallyl)adenosine (ms(2)i(6)A) at position 37 in tRNAs that read codons beginning with uridine. The sequence is that of tRNA-2-methylthio-N(6)-dimethylallyladenosine synthase from Hydrogenobaculum sp. (strain Y04AAS1).